Reading from the N-terminus, the 513-residue chain is ATP synthase subunit alpha (513 aa).

Residue 169 to 176 participates in ATP binding; that stretch reads GDRQTGKT.

The protein belongs to the ATPase alpha/beta chains family. As to quaternary structure, F-type ATPases have 2 components, CF(1) - the catalytic core - and CF(0) - the membrane proton channel. CF(1) has five subunits: alpha(3), beta(3), gamma(1), delta(1), epsilon(1). CF(0) has three main subunits: a(1), b(2) and c(9-12). The alpha and beta chains form an alternating ring which encloses part of the gamma chain. CF(1) is attached to CF(0) by a central stalk formed by the gamma and epsilon chains, while a peripheral stalk is formed by the delta and b chains.

It localises to the cell inner membrane. It catalyses the reaction ATP + H2O + 4 H(+)(in) = ADP + phosphate + 5 H(+)(out). Functionally, produces ATP from ADP in the presence of a proton gradient across the membrane. The alpha chain is a regulatory subunit. In Cupriavidus metallidurans (strain ATCC 43123 / DSM 2839 / NBRC 102507 / CH34) (Ralstonia metallidurans), this protein is ATP synthase subunit alpha.